The primary structure comprises 241 residues: tRNA pseudouridine synthase A (241 aa).

The active-site Nucleophile is Asp51. Tyr110 is a binding site for substrate.

The protein belongs to the tRNA pseudouridine synthase TruA family. In terms of assembly, homodimer.

It carries out the reaction uridine(38/39/40) in tRNA = pseudouridine(38/39/40) in tRNA. Formation of pseudouridine at positions 38, 39 and 40 in the anticodon stem and loop of transfer RNAs. This chain is tRNA pseudouridine synthase A, found in Campylobacter jejuni subsp. jejuni serotype O:23/36 (strain 81-176).